A 118-amino-acid chain; its full sequence is Large ribosomal subunit protein bL20 (118 aa).

It belongs to the bacterial ribosomal protein bL20 family.

Functionally, binds directly to 23S ribosomal RNA and is necessary for the in vitro assembly process of the 50S ribosomal subunit. It is not involved in the protein synthesizing functions of that subunit. This chain is Large ribosomal subunit protein bL20, found in Hamiltonella defensa subsp. Acyrthosiphon pisum (strain 5AT).